The primary structure comprises 213 residues: UPF0319 protein HAPS_0727 (213 aa).

Residues Met-1–Ala-21 form the signal peptide.

This sequence belongs to the UPF0319 family.

This chain is UPF0319 protein HAPS_0727, found in Glaesserella parasuis serovar 5 (strain SH0165) (Haemophilus parasuis).